The following is a 590-amino-acid chain: UvrABC system protein C (590 aa).

Residues 11–85 (ETPGVYLWKR…IKAHRPLYNV (75 aa)) enclose the GIY-YIG domain. In terms of domain architecture, UVR spans 194–229 (DGLLQELEAKMREAARRLEFERAAEIRDQMEALRAF).

Belongs to the UvrC family. As to quaternary structure, interacts with UvrB in an incision complex.

It localises to the cytoplasm. In terms of biological role, the UvrABC repair system catalyzes the recognition and processing of DNA lesions. UvrC both incises the 5' and 3' sides of the lesion. The N-terminal half is responsible for the 3' incision and the C-terminal half is responsible for the 5' incision. The sequence is that of UvrABC system protein C from Thermus thermophilus (strain ATCC 27634 / DSM 579 / HB8).